The sequence spans 115 residues: Large ribosomal subunit protein uL22 (115 aa).

The protein belongs to the universal ribosomal protein uL22 family. In terms of assembly, part of the 50S ribosomal subunit.

In terms of biological role, this protein binds specifically to 23S rRNA; its binding is stimulated by other ribosomal proteins, e.g. L4, L17, and L20. It is important during the early stages of 50S assembly. It makes multiple contacts with different domains of the 23S rRNA in the assembled 50S subunit and ribosome. The globular domain of the protein is located near the polypeptide exit tunnel on the outside of the subunit, while an extended beta-hairpin is found that lines the wall of the exit tunnel in the center of the 70S ribosome. This chain is Large ribosomal subunit protein uL22, found in Limosilactobacillus reuteri subsp. reuteri (strain JCM 1112) (Lactobacillus reuteri).